The chain runs to 954 residues: MTQKFEMADRFNPSAVEQALYQHWEESGYFKPSGNENAPSYCIAIPPPNVTGSLHMGHAFQQTLMDTLIRFNRMEGHNTLWQAGTDHAGIATQMVVERKIGAEEGKTRHDYGREAFINKIWDWKAYSGGTISQQMRRLGNSIDWERERFTMDDGLSNAVKEVFVRLHEEGLIYRGKRLVNWDPKLHTAISDLEVENKESKGSLWHFRYPLANGAKTADGKDYLVVATTRPETMLGDTAVAVHPEDERYQSLIGKTVVLPLANREIPIIADEYVDREFGTGVVKITPAHDFNDYEVGKRHGLPMVNVLTLNADIRDEAEIIGTDGKPLAGYEATIPADYRGLERFAARKKIVADFESLGLLDEIKPHDLKVPYGDRGGVPIEPMLTDQWYVSVKPLADVAIKAVEDCEIQFVPKQYENLYFSWMRDIQDWCISRQLWWGHRIPAWYDTEGNVYVARNETEVRSKYNLDFAVELKQDEDVLDTWFSSGLWTFSTLGWPEQTKELKMFHPTDVLITGFDIIFFWVARMIMFTMHFVKDENGKPQVPFKTVYVTGLIRDEQGQKMSKSKGNVLDPIDMIDGISLDDLLEKRTGNMMQPQLAEKIAKATRKEFADGIAAHGTDALRFTLAALASNGRDINWDMKRLEGYRNFCNKLWNASRFVLTNDKLDLSEGEIEFSLADRWIQSEFNRTVETFRNSLSQYRFDLCANAIYEFTWNQFCDWYLELTKPVFANGNAAQIRAASQTLVHVLEKLLRLAHPLIPFITEEIWQKVKGFVGITADSIMLQPFPQVEESGFDLEAEAEIEWLKEVIVAVRNIRAESNIAPSKGLDLLFRNLSTENAKILEKQTALLKAMAKLDNVQVLAANETAPLAVAKLVGNAELLVPMAGFINKEAELARLTKEIEKYQNEVKRIENKLSNEAFVAKAPEAVIAKEREKQAEYQSGLEKIQEQYKAIEAL.

Positions 48 to 58 match the 'HIGH' region motif; that stretch reads PNVTGSLHMGH. The 'KMSKS' region motif lies at 560–564; sequence KMSKS. An ATP-binding site is contributed by K563. The stretch at 883–953 forms a coiled coil; sequence AGFINKEAEL…IQEQYKAIEA (71 aa).

It belongs to the class-I aminoacyl-tRNA synthetase family. ValS type 1 subfamily. As to quaternary structure, monomer.

The protein localises to the cytoplasm. The catalysed reaction is tRNA(Val) + L-valine + ATP = L-valyl-tRNA(Val) + AMP + diphosphate. Catalyzes the attachment of valine to tRNA(Val). As ValRS can inadvertently accommodate and process structurally similar amino acids such as threonine, to avoid such errors, it has a 'posttransfer' editing activity that hydrolyzes mischarged Thr-tRNA(Val) in a tRNA-dependent manner. The sequence is that of Valine--tRNA ligase from Haemophilus influenzae (strain PittEE).